We begin with the raw amino-acid sequence, 157 residues long: Crossover junction endodeoxyribonuclease RuvC (157 aa).

Residues Asp7, Glu66, and Asp139 contribute to the active site. Residues Asp7, Glu66, and Asp139 each coordinate Mg(2+).

It belongs to the RuvC family. In terms of assembly, homodimer which binds Holliday junction (HJ) DNA. The HJ becomes 2-fold symmetrical on binding to RuvC with unstacked arms; it has a different conformation from HJ DNA in complex with RuvA. In the full resolvosome a probable DNA-RuvA(4)-RuvB(12)-RuvC(2) complex forms which resolves the HJ. The cofactor is Mg(2+).

The protein localises to the cytoplasm. It catalyses the reaction Endonucleolytic cleavage at a junction such as a reciprocal single-stranded crossover between two homologous DNA duplexes (Holliday junction).. In terms of biological role, the RuvA-RuvB-RuvC complex processes Holliday junction (HJ) DNA during genetic recombination and DNA repair. Endonuclease that resolves HJ intermediates. Cleaves cruciform DNA by making single-stranded nicks across the HJ at symmetrical positions within the homologous arms, yielding a 5'-phosphate and a 3'-hydroxyl group; requires a central core of homology in the junction. The consensus cleavage sequence is 5'-(A/T)TT(C/G)-3'. Cleavage occurs on the 3'-side of the TT dinucleotide at the point of strand exchange. HJ branch migration catalyzed by RuvA-RuvB allows RuvC to scan DNA until it finds its consensus sequence, where it cleaves and resolves the cruciform DNA. The polypeptide is Crossover junction endodeoxyribonuclease RuvC (Helicobacter pylori (strain ATCC 700392 / 26695) (Campylobacter pylori)).